Here is a 113-residue protein sequence, read N- to C-terminus: Dynein light chain Tctex-type 1 (113 aa).

Met1 carries the N-acetylmethionine modification. Residues 41–113 are interaction with GNB1; that stretch reads QWTTNVLEQT…CIVSTFGLSI (73 aa).

Belongs to the dynein light chain Tctex-type family. In terms of assembly, homodimer. The cytoplasmic dynein 1 complex consists of two catalytic heavy chains (HCs) and a number of non-catalytic subunits presented by intermediate chains (ICs), light intermediate chains (LICs) and light chains (LCs); the composition seems to vary in respect to the IC, LIC and LC composition. The heavy chain homodimer serves as a scaffold for the probable homodimeric assembly of the respective non-catalytic subunits. The ICs and LICs bind directly to the HC dimer and the LCs assemble on the IC dimer. DYNLT1 and DYNLT3 compete for association with dynein IC (DYNC1I1 or DYNC1I2). Self-associates. Interacts with RHO. Interacts with DYNC1I1 and DYNC1I2. Interacts with DOC2A, DOC2B and SCN10A. Interacts with PVR. Interacts with SVIL isoform 2. Interacts with GNB1; the interaction occurs in presence of guanine nucleotide-binding protein G(T) subunit gamma; the interaction diminishes the association of DYNLT1 with dynein IC (DYNC1I1 or DYNC1I2). Interacts with GNB2, GNB3 and GNB5; the interactions occur in presence of guanine nucleotide-binding protein G(T) subunit gamma. Interacts with ACVR2B and ARHGEF2. Interacts with DNAI4. Interacts with CFAP61. Phosphorylated by BMPR2. The phosphorylation status is proposed to regulate the association with the cytoplasmic dynein complex and may have role in cytoplasmic dynein cargo release. As to expression, high level in testis (germ cell-specific). Expressed in sperm (at protein level). 200-fold lower in liver, brain, heart, spleen, and kidney. Levels in thymus and two embryonal carcinoma cell lines were several-fold higher than this low constitutive level.

Its subcellular location is the golgi apparatus. It is found in the cytoplasm. It localises to the cytoskeleton. The protein localises to the spindle. Functionally, acts as one of several non-catalytic accessory components of the cytoplasmic dynein 1 complex that are thought to be involved in linking dynein to cargos and to adapter proteins that regulate dynein function. Cytoplasmic dynein 1 acts as a motor for the intracellular retrograde motility of vesicles and organelles along microtubules. Binds to transport cargos and is involved in apical cargo transport such as rhodopsin-bearing vesicles in polarized epithelia. May also be a accessory component of axonemal dynein. Plays an important role in male germ cell development and function. Candidate for involvement in male sterility. Its function is as follows. Plays a role in neuronal morphogenesis; the function is independent of cytoplasmic dynein and seems to be coupled to regulation of the actin cytoskeleton by enhancing Rac1 activity. The function in neurogenesis may be regulated by association with a G-protein beta-gamma dimer. May function as a receptor-independent activator of heterotrimeric G-protein signaling; the activation appears to be independent of a nucleotide exchange. Plays a role in regulating neurogenesis; inhibits the genesis of neurons from precursor cells during cortical development presumably by antagonizing ARHGEF2. Unrelated to the role in retrograde microtubule-associated movement may play a role in the dimerization of cytoplasmic proteins/domains such as for ACVR2B. Binds to the cytoplasmic domain of ACVR2B and, in vitro, inhibits ACVR2B signaling. Involved in the regulation of mitotic spindle orientation. This is Dynein light chain Tctex-type 1 (Dynlt1) from Mus musculus (Mouse).